The sequence spans 194 residues: Type II restriction enzyme OkrAI (194 aa).

The Mg(2+) site is built by glutamate 71, aspartate 86, and tryptophan 100. The Proton acceptor role is filled by glutamate 101.

As to quaternary structure, homodimer. The cofactor is Mg(2+).

It catalyses the reaction Endonucleolytic cleavage of DNA to give specific double-stranded fragments with terminal 5'-phosphates.. A P subtype restriction enzyme that recognizes the double-stranded sequence 5'-GGATCC-3' and cleaves after G-1. This Oceanobacter kriegii (Oceanospirillum kriegii) protein is Type II restriction enzyme OkrAI.